We begin with the raw amino-acid sequence, 351 residues long: Ribosomal RNA small subunit methyltransferase H (351 aa).

S-adenosyl-L-methionine-binding positions include Gly48–Tyr50, Asp67, Phe94, Asp115, and Gln122. The disordered stretch occupies residues Ala274 to Arg351.

This sequence belongs to the methyltransferase superfamily. RsmH family.

The protein localises to the cytoplasm. The catalysed reaction is cytidine(1402) in 16S rRNA + S-adenosyl-L-methionine = N(4)-methylcytidine(1402) in 16S rRNA + S-adenosyl-L-homocysteine + H(+). Its function is as follows. Specifically methylates the N4 position of cytidine in position 1402 (C1402) of 16S rRNA. The protein is Ribosomal RNA small subunit methyltransferase H of Methylorubrum extorquens (strain PA1) (Methylobacterium extorquens).